The primary structure comprises 791 residues: RAS guanyl-releasing protein 1 (791 aa).

Residues 49–172 enclose the N-terminal Ras-GEF domain; it reads LGKLSKGASL…RLIDTAQINS (124 aa). Positions 53-106 are ras exchanger motif region; required for transforming activity; that stretch reads SKGASLDDLIQMCIQAFDLDGNMGQNSELLQIMLTMHGFLLPSTELLMKLRTLY. The Ras-GEF domain occupies 201–432; that stretch reads EPQELAEHLT…YELSYAREPR (232 aa). EF-hand domains are found at residues 466–501 and 502–528; these read HVQR…FPFS and FCVM…ASSI. Ca(2+) contacts are provided by Asp479, Asp481, Asp483, Tyr485, Glu490, Asp506, Asp508, Glu510, and Glu517. The Phorbol-ester/DAG-type zinc-finger motif lies at 537-587; that stretch reads LHNFQETTYLRPTFCDNCAGFLWGVIKQGYRCKDCGMNCHKQCKELVVFEC. A compositionally biased stretch (polar residues) spans 683 to 695; the sequence is QVPSPQRSRTPGL. The interval 683-715 is disordered; sequence QVPSPQRSRTPGLTSHLPISPMPSPCPSPVPTR. Residues 702-712 are compositionally biased toward pro residues; sequence SPMPSPCPSPV. Residues 728 to 785 are a coiled coil; the sequence is IRKARAELRGGKAGIQELEKEKALLKEENTTLKIQLKDAQRRVETLRAELRKYVLDSD.

Belongs to the RASGRP family.

The protein resides in the cytoplasm. The protein localises to the cytosol. It is found in the cell membrane. It localises to the golgi apparatus membrane. Its subcellular location is the endoplasmic reticulum membrane. Its activity is regulated as follows. Regulated by F-actin polymerization and probably by calcium. Functionally, functions as a diacylglycerol (DAG)-regulated nucleotide exchange factor specifically activating Ras through the exchange of bound GDP for GTP. The chain is RAS guanyl-releasing protein 1 (rasgrp1) from Xenopus tropicalis (Western clawed frog).